Here is a 125-residue protein sequence, read N- to C-terminus: Large ribosomal subunit protein bL12 (125 aa).

It belongs to the bacterial ribosomal protein bL12 family. As to quaternary structure, homodimer. Part of the ribosomal stalk of the 50S ribosomal subunit. Forms a multimeric L10(L12)X complex, where L10 forms an elongated spine to which 2 to 4 L12 dimers bind in a sequential fashion. Binds GTP-bound translation factors.

In terms of biological role, forms part of the ribosomal stalk which helps the ribosome interact with GTP-bound translation factors. Is thus essential for accurate translation. This chain is Large ribosomal subunit protein bL12, found in Anaeromyxobacter sp. (strain Fw109-5).